The chain runs to 189 residues: uncharacterized protein (189 aa).

Residues 1 to 20 form the signal peptide; the sequence is MKFSTVGFLFSTILFKSAFA. Positions 74 to 109 constitute an EF-hand domain; sequence KKNEVLVDVLKKCDPSGNRRITLDEFLAFRKNGGEL. Asp-87, Ser-89, Asn-91, Arg-93, and Glu-98 together coordinate Ca(2+).

It localises to the endoplasmic reticulum lumen. The protein localises to the golgi apparatus lumen. This is an uncharacterized protein from Schizosaccharomyces pombe (strain 972 / ATCC 24843) (Fission yeast).